The sequence spans 155 residues: Small ribosomal subunit protein uS7c (155 aa).

The protein belongs to the universal ribosomal protein uS7 family. Part of the 30S ribosomal subunit.

Its subcellular location is the plastid. It is found in the chloroplast. One of the primary rRNA binding proteins, it binds directly to 16S rRNA where it nucleates assembly of the head domain of the 30S subunit. This chain is Small ribosomal subunit protein uS7c (rps7), found in Cryptomeria japonica (Japanese cedar).